Here is a 270-residue protein sequence, read N- to C-terminus: Myelin protein zero-like protein 1 (270 aa).

The first 35 residues, 1–35, serve as a signal peptide directing secretion; that stretch reads MAEAVGAVALIAAPARRRWLWSVLAAMLGLLTARI. One can recognise an Ig-like V-type domain in the interval 36–151; the sequence is SALEVHTPKE…DIVVRPGHIR (116 aa). At 36–162 the chain is on the extracellular side; sequence SALEVHTPKE…HVVEIDNLLV (127 aa). 2 N-linked (GlcNAc...) asparagine glycosylation sites follow: Asn-50 and Asn-130. An intrachain disulfide couples Cys-58 to Cys-135. The chain crosses the membrane as a helical span at residues 163–183; it reads FLVWVVVGTVTAVVLGLTLLI. The Cytoplasmic segment spans residues 184 to 270; it reads SLVLVVLYRR…SVVYADIRKD (87 aa). The disordered stretch occupies residues 201–257; sequence TGCSTSERLSPVKQAPRKCPSDTEGLVKSPPSAGSHQGPVIYAQLDHSGGHHSGKIN. Phosphoserine is present on residues Ser-204, Ser-206, Ser-210, and Ser-221. An ITIM motif 1 motif is present at residues 240-245; sequence VIYAQL. Phosphotyrosine is present on Tyr-242. Phosphoserine is present on Ser-261. The short motif at 262–267 is the ITIM motif 2 element; the sequence is VVYADI. Residue Tyr-264 is modified to Phosphotyrosine.

It belongs to the myelin P0 protein family. In terms of assembly, interacts with phosphorylated PTPN11/SHP-2. Post-translationally, phosphorylated on tyrosine residues upon stimulation with pervanadate and concanavalin-A (ConA). Phosphorylation at Tyr-242 and Tyr-264 is required for interaction with PTPN11/SHP-2. Dephosphorylated by PTPN11/SHP-2 (in vitro).

The protein localises to the membrane. Cell surface receptor, which is involved in signal transduction processes. Recruits PTPN11/SHP-2 to the cell membrane and is a putative substrate of PTPN11/SHP-2. Is a major receptor for concanavalin-A (ConA) and is involved in cellular signaling induced by ConA, which probably includes Src family tyrosine-protein kinases. Isoform 2 seems to have a dominant negative role; it blocks tyrosine phosphorylation of MPZL1 induced by ConA. Isoform 1, but not isoform 2, may be involved in regulation of integrin-mediated cell motility. The polypeptide is Myelin protein zero-like protein 1 (Mpzl1) (Mus musculus (Mouse)).